The following is a 381-amino-acid chain: 1-deoxy-D-xylulose 5-phosphate reductoisomerase (381 aa).

Residues Thr-11, Gly-12, Ser-13, Ile-14, Lys-36, Asn-37, and Asn-121 each coordinate NADPH. 1-deoxy-D-xylulose 5-phosphate is bound at residue Lys-122. Glu-123 lines the NADPH pocket. Asp-147 lines the Mn(2+) pocket. 1-deoxy-D-xylulose 5-phosphate is bound by residues Ser-148, Glu-149, Ser-173, and His-196. A Mn(2+)-binding site is contributed by Glu-149. NADPH is bound at residue Gly-202. 1-deoxy-D-xylulose 5-phosphate-binding residues include Ser-209, Asn-214, Lys-215, and Glu-218. Glu-218 provides a ligand contact to Mn(2+).

Belongs to the DXR family. The cofactor is Mg(2+). Requires Mn(2+) as cofactor.

The catalysed reaction is 2-C-methyl-D-erythritol 4-phosphate + NADP(+) = 1-deoxy-D-xylulose 5-phosphate + NADPH + H(+). The protein operates within isoprenoid biosynthesis; isopentenyl diphosphate biosynthesis via DXP pathway; isopentenyl diphosphate from 1-deoxy-D-xylulose 5-phosphate: step 1/6. Its function is as follows. Catalyzes the NADPH-dependent rearrangement and reduction of 1-deoxy-D-xylulose-5-phosphate (DXP) to 2-C-methyl-D-erythritol 4-phosphate (MEP). The polypeptide is 1-deoxy-D-xylulose 5-phosphate reductoisomerase (Acetivibrio thermocellus (strain ATCC 27405 / DSM 1237 / JCM 9322 / NBRC 103400 / NCIMB 10682 / NRRL B-4536 / VPI 7372) (Clostridium thermocellum)).